A 141-amino-acid chain; its full sequence is Large ribosomal subunit protein uL11 (141 aa).

This sequence belongs to the universal ribosomal protein uL11 family. As to quaternary structure, part of the ribosomal stalk of the 50S ribosomal subunit. Interacts with L10 and the large rRNA to form the base of the stalk. L10 forms an elongated spine to which L12 dimers bind in a sequential fashion forming a multimeric L10(L12)X complex. One or more lysine residues are methylated.

Its function is as follows. Forms part of the ribosomal stalk which helps the ribosome interact with GTP-bound translation factors. The sequence is that of Large ribosomal subunit protein uL11 from Chlorobium phaeovibrioides (strain DSM 265 / 1930) (Prosthecochloris vibrioformis (strain DSM 265)).